The sequence spans 465 residues: Phytase A (465 aa).

The first 26 residues, 1 to 26 (MVTLTFLLSAAYLLSGRVSAAPSSAG), serve as a signal peptide directing secretion. Cysteines 30 and 39 form a disulfide. The 1D-myo-inositol hexakisphosphate site is built by Gln49, Tyr50, Arg80, His81, Arg84, and Thr87. Disulfide bonds link Cys70–Cys412, Cys213–Cys463, Cys262–Cys280, and Cys434–Cys442. His81 functions as the Nucleophile in the catalytic mechanism. Asn104 is a glycosylation site (N-linked (GlcNAc...) asparagine). Residue Arg164 participates in 1D-myo-inositol hexakisphosphate binding. Asn205 carries an N-linked (GlcNAc...) asparagine glycan. Asp209 is a 1D-myo-inositol hexakisphosphate binding site. A glycan (N-linked (GlcNAc...) asparagine) is linked at Asn228. Residue Lys299 participates in 1D-myo-inositol hexakisphosphate binding. Asn337 and Asn350 each carry an N-linked (GlcNAc...) asparagine glycan. The 1D-myo-inositol hexakisphosphate site is built by His359 and Asp360. N-linked (GlcNAc...) asparagine glycosylation occurs at Asn374.

This sequence belongs to the histidine acid phosphatase family. As to quaternary structure, monomer.

It is found in the secreted. It carries out the reaction 1D-myo-inositol hexakisphosphate + H2O = 1D-myo-inositol 1,2,4,5,6-pentakisphosphate + phosphate. The enzyme catalyses 1D-myo-inositol 1,2,4,5,6-pentakisphosphate + H2O = 1D-myo-inositol 1,2,5,6-tetrakisphosphate + phosphate. It catalyses the reaction 1D-myo-inositol 1,2,5,6-tetrakisphosphate + H2O = 1D-myo-inositol 1,2,6-trisphosphate + phosphate. The catalysed reaction is 1D-myo-inositol 1,2,6-trisphosphate + H2O = 1D-myo-inositol 1,2-bisphosphate + phosphate. It carries out the reaction 1D-myo-inositol 1,2-bisphosphate + H2O = 1D-myo-inositol 2-phosphate + phosphate. In terms of biological role, catalyzes the phosphate monoester hydrolysis of phytic acid (myo-inositol hexakisphosphate), which results in the stepwise formation of myo-inositol pentakis-, tetrakis-, tris-, bis-, and monophosphates, as well as the liberation of inorganic phosphate. Myo-inositol 2-monophosphate is the end product. Has a broad substrate specificity and is also able to dephosphorylate other classic acid phosphatase substrates such as p-nitrophenyl phosphate, phenyl phosphate, fructose 1,6-bisphosphate, fructose 6-phosphate, glucose 6-phosphate, ribose 5-phosphate, alpha-glycerophosphate, beta-glycerophosphate, 3-phosphoglycerate, phosphoenolpyruvate, as well as ADP and ATP. This Aspergillus fumigatus (strain ATCC MYA-4609 / CBS 101355 / FGSC A1100 / Af293) (Neosartorya fumigata) protein is Phytase A (phyA).